The chain runs to 309 residues: Aspartate carbamoyltransferase catalytic subunit (309 aa).

Carbamoyl phosphate is bound by residues Arg55 and Thr56. Lys85 lines the L-aspartate pocket. Carbamoyl phosphate is bound by residues Arg106, His135, and Gln138. L-aspartate is bound by residues Arg168 and Arg230. Carbamoyl phosphate-binding residues include Leu268 and Pro269.

The protein belongs to the aspartate/ornithine carbamoyltransferase superfamily. ATCase family. In terms of assembly, heterododecamer (2C3:3R2) of six catalytic PyrB chains organized as two trimers (C3), and six regulatory PyrI chains organized as three dimers (R2).

It carries out the reaction carbamoyl phosphate + L-aspartate = N-carbamoyl-L-aspartate + phosphate + H(+). The protein operates within pyrimidine metabolism; UMP biosynthesis via de novo pathway; (S)-dihydroorotate from bicarbonate: step 2/3. Catalyzes the condensation of carbamoyl phosphate and aspartate to form carbamoyl aspartate and inorganic phosphate, the committed step in the de novo pyrimidine nucleotide biosynthesis pathway. The sequence is that of Aspartate carbamoyltransferase catalytic subunit from Aliivibrio fischeri (strain ATCC 700601 / ES114) (Vibrio fischeri).